A 395-amino-acid chain; its full sequence is LIM/homeobox protein Lhx3 (395 aa).

LIM zinc-binding domains follow at residues 28–78 (CAGC…CKDD) and 87–141 (CAAC…CKAD). The homeobox DNA-binding region spans 154-213 (AKRPRTTITAKQLETLKNAYNNSPKPARHVREQLSSETGLDMRVVQVWFQNRRAKEKRLK). 2 disordered regions span residues 208 to 304 (KEKR…QDQY) and 363 to 383 (GPSS…PVSP). Positions 257–278 (DEPSMSEMNHSNGIYNSLNDSS) are enriched in polar residues.

As to quaternary structure, interacts with ldb1 and with the N-terminus of rnf12. As to expression, in dorsal regions at neural tube and tailbud stages and in adults predominantly in the pituitary gland and weakly in the eye and brain.

The protein localises to the nucleus. Functionally, transcription factor. May be involved in the specification and maintenance of differentiation of distinct neuronal and neuroendocrine tissues. Early marker for the pituitary and pineal lineages, it may be involved in specifying these lineages. The protein is LIM/homeobox protein Lhx3 (lhx3) of Xenopus laevis (African clawed frog).